A 1160-amino-acid chain; its full sequence is Envelope glycoprotein (1160 aa).

The first 22 residues, 1–22 (MDTPGSLQVIAIISLLLVGGAS), serve as a signal peptide directing secretion. Topologically, residues 23–853 (QPATFLEKAL…DGSVWSQLQL (831 aa)) are extracellular. N-linked (GlcNAc...) asparagine; by host glycans are attached at residues N50, N95, N109, N134, N148, N232, N254, N304, N323, N621, N664, N722, and N771. A disordered region spans residues 230–251 (VPNSTLSPTGTTDFTKFTPNPI). Residues 854–874 (IIVVITCTIPLLWVLNTCLFF) traverse the membrane as a helical segment. Topologically, residues 875 to 1048 (KLRRAIRRER…VNQHAEYMGK (174 aa)) are cytoplasmic. Residues 1049–1069 (PVIVTLAGLVITPVGLAWIPL) form a helical membrane-spanning segment. At 1070-1127 (PQQEPLEKLFMVPNSMPHVTVAMADYHETKEMGKIVKDINNEELLLVKPQLFKWGPEG) the chain is on the extracellular side. The helical transmembrane segment at 1128–1148 (FFVACPLVIRGVVTGHSLLHI) threads the bilayer. Residues 1149 to 1160 (ACPATAVQAEGT) lie on the Cytoplasmic side of the membrane.

The mature envelope protein (Env) consists of a trimer of SU-TM heterodimers attached by non-covalent interactions or by a labile interchain disulfide bond. In terms of processing, specific enzymatic cleavages in vivo yield mature proteins. Envelope glycoproteins are synthesized as an inactive precursor that is N-glycosylated and processed likely by host cell furin or by a furin-like protease in the Golgi to yield the mature SU and TM proteins. The cleavage site between SU and TM requires the minimal sequence [KR]-X-[KR]-R.

The protein resides in the virion membrane. The protein localises to the host cell membrane. Functionally, (SU) attaches the virus to the host cell by binding to its receptor. This interaction triggers the refolding of the transmembrane protein (TM) and is thought to activate its fusogenic potential by unmasking its fusion peptide. Fusion occurs at the host cell plasma membrane. (TM) acts as a class I viral fusion protein. Under the current model, the protein has at least 3 conformational states: pre-fusion native state, pre-hairpin intermediate state, and post-fusion hairpin state. During viral and target cell membrane fusion, the coiled coil regions (heptad repeats) assume a trimer-of-hairpins structure, positioning the fusion peptide in close proximity to the C-terminal region of the ectodomain. The formation of this structure appears to drive apposition and subsequent fusion of viral and target cell membranes. Membranes fusion leads to delivery of the nucleocapsid into the cytoplasm. This Walleye dermal sarcoma virus (WDSV) protein is Envelope glycoprotein (env).